The sequence spans 311 residues: Porphobilinogen deaminase (311 aa).

Position 243 is an S-(dipyrrolylmethanemethyl)cysteine (C243).

This sequence belongs to the HMBS family. As to quaternary structure, monomer. The cofactor is dipyrromethane.

The enzyme catalyses 4 porphobilinogen + H2O = hydroxymethylbilane + 4 NH4(+). It participates in porphyrin-containing compound metabolism; protoporphyrin-IX biosynthesis; coproporphyrinogen-III from 5-aminolevulinate: step 2/4. Its function is as follows. Tetrapolymerization of the monopyrrole PBG into the hydroxymethylbilane pre-uroporphyrinogen in several discrete steps. The polypeptide is Porphobilinogen deaminase (Blochmanniella floridana).